The following is a 436-amino-acid chain: Gamma-glutamyl phosphate reductase (436 aa).

The protein belongs to the gamma-glutamyl phosphate reductase family.

It is found in the cytoplasm. The enzyme catalyses L-glutamate 5-semialdehyde + phosphate + NADP(+) = L-glutamyl 5-phosphate + NADPH + H(+). Its pathway is amino-acid biosynthesis; L-proline biosynthesis; L-glutamate 5-semialdehyde from L-glutamate: step 2/2. Functionally, catalyzes the NADPH-dependent reduction of L-glutamate 5-phosphate into L-glutamate 5-semialdehyde and phosphate. The product spontaneously undergoes cyclization to form 1-pyrroline-5-carboxylate. The polypeptide is Gamma-glutamyl phosphate reductase (Prochlorococcus marinus (strain SARG / CCMP1375 / SS120)).